Here is a 232-residue protein sequence, read N- to C-terminus: Ribose-5-phosphate isomerase A (232 aa).

Residues 28 to 31 (TGST), 83 to 86 (DGAD), and 96 to 99 (KGGG) each bind substrate. Residue Glu105 is the Proton acceptor of the active site. Lys123 is a binding site for substrate.

The protein belongs to the ribose 5-phosphate isomerase family. Homodimer.

It carries out the reaction aldehydo-D-ribose 5-phosphate = D-ribulose 5-phosphate. Its pathway is carbohydrate degradation; pentose phosphate pathway; D-ribose 5-phosphate from D-ribulose 5-phosphate (non-oxidative stage): step 1/1. Its function is as follows. Catalyzes the reversible conversion of ribose-5-phosphate to ribulose 5-phosphate. The sequence is that of Ribose-5-phosphate isomerase A from Rhizobium etli (strain ATCC 51251 / DSM 11541 / JCM 21823 / NBRC 15573 / CFN 42).